Reading from the N-terminus, the 267-residue chain is Cilia- and flagella-associated protein 300 (267 aa).

This sequence belongs to the CFAP300 family. As to quaternary structure, interacts with DNAAF2. In terms of tissue distribution, expressed in the left-right organiser (LRO) node at 8.25 dpc.

It is found in the cytoplasm. The protein localises to the cytoskeleton. It localises to the cilium axoneme. Cilium- and flagellum-specific protein that plays a role in axonemal structure organization and motility. May play a role in outer and inner dynein arm assembly. This Mus musculus (Mouse) protein is Cilia- and flagella-associated protein 300.